The sequence spans 279 residues: Thymidylate synthase (279 aa).

133–134 (RR) serves as a coordination point for dUMP. The active-site Nucleophile is cysteine 154. DUMP is bound by residues 178–181 (RSND), asparagine 189, and 219–221 (HIY). Aspartate 181 lines the (6R)-5,10-methylene-5,6,7,8-tetrahydrofolate pocket. Alanine 278 is a binding site for (6R)-5,10-methylene-5,6,7,8-tetrahydrofolate.

The protein belongs to the thymidylate synthase family. Bacterial-type ThyA subfamily. In terms of assembly, homodimer.

The protein resides in the cytoplasm. The enzyme catalyses dUMP + (6R)-5,10-methylene-5,6,7,8-tetrahydrofolate = 7,8-dihydrofolate + dTMP. The protein operates within pyrimidine metabolism; dTTP biosynthesis. Its function is as follows. Catalyzes the reductive methylation of 2'-deoxyuridine-5'-monophosphate (dUMP) to 2'-deoxythymidine-5'-monophosphate (dTMP) while utilizing 5,10-methylenetetrahydrofolate (mTHF) as the methyl donor and reductant in the reaction, yielding dihydrofolate (DHF) as a by-product. This enzymatic reaction provides an intracellular de novo source of dTMP, an essential precursor for DNA biosynthesis. This is Thymidylate synthase from Streptococcus pneumoniae (strain ATCC 700669 / Spain 23F-1).